A 396-amino-acid polypeptide reads, in one-letter code: Elongation factor Tu (396 aa).

A tr-type G domain is found at 10-205 (KPHVNIGTIG…AVDESIPDPV (196 aa)). Positions 19–26 (GHVDHGKT) are G1. 19 to 26 (GHVDHGKT) is a binding site for GTP. Threonine 26 provides a ligand contact to Mg(2+). The G2 stretch occupies residues 62 to 66 (GITIN). The G3 stretch occupies residues 83 to 86 (DAPG). GTP is bound by residues 83–87 (DAPGH) and 138–141 (NKAD). Residues 138-141 (NKAD) form a G4 region. Positions 175–177 (SAL) are G5.

It belongs to the TRAFAC class translation factor GTPase superfamily. Classic translation factor GTPase family. EF-Tu/EF-1A subfamily. Monomer.

It is found in the cytoplasm. It catalyses the reaction GTP + H2O = GDP + phosphate + H(+). In terms of biological role, GTP hydrolase that promotes the GTP-dependent binding of aminoacyl-tRNA to the A-site of ribosomes during protein biosynthesis. The chain is Elongation factor Tu from Mycolicibacterium vanbaalenii (strain DSM 7251 / JCM 13017 / BCRC 16820 / KCTC 9966 / NRRL B-24157 / PYR-1) (Mycobacterium vanbaalenii).